The chain runs to 115 residues: Nucleoid-associated protein PMN2A_1347 (115 aa).

The interval 89–115 is disordered; that stretch reads STSTMKERMEDLTGGFKLNLPGMGEEN.

The protein belongs to the YbaB/EbfC family. Homodimer.

The protein localises to the cytoplasm. Its subcellular location is the nucleoid. In terms of biological role, binds to DNA and alters its conformation. May be involved in regulation of gene expression, nucleoid organization and DNA protection. This chain is Nucleoid-associated protein PMN2A_1347, found in Prochlorococcus marinus (strain NATL2A).